The sequence spans 387 residues: MNFKRMTDLDLAGKRVLIREDLNVPVKDGKVTSDARIRASLPTIEHALKAGAKVMLMSHLGRPTEGEYAEEFSLQPVADHLGGLLGRDVPLVKDWLGGVEVADGQVVLCENVRFNQGEKKDDEALSQKMAALCDIYVMDAFGTAHRAQASTHGVGKFAPVACAGPLLANELDALGKALDAPAKPLVAIVGGSKVSTKLEVLESLSDKVDQLVVGGGIANTFLAAAGHPVGKSLYEKDLIPAAQKIAEKVHIPIPVDVVTAKAFSESAEAATKKVEDVADDDMILDVGPQTAHIVAALMKEAKTIIWNGPVGVFEFDQFGEGTREMALAIADSDAFSIAGGGDTLAAVDKYGITDKVSYISTGGGAFLEFVEGKVLPAVAMLEARAKD.

Residues 21–23 (DLN), Arg-36, 59–62 (HLGR), Arg-113, and Arg-146 each bind substrate. ATP is bound by residues Lys-197, Glu-314, and 340–343 (GGDT).

Belongs to the phosphoglycerate kinase family. In terms of assembly, monomer.

Its subcellular location is the cytoplasm. It carries out the reaction (2R)-3-phosphoglycerate + ATP = (2R)-3-phospho-glyceroyl phosphate + ADP. It participates in carbohydrate degradation; glycolysis; pyruvate from D-glyceraldehyde 3-phosphate: step 2/5. This Alcanivorax borkumensis (strain ATCC 700651 / DSM 11573 / NCIMB 13689 / SK2) protein is Phosphoglycerate kinase.